The chain runs to 889 residues: TATA box-binding protein-associated factor RNA polymerase I subunit B (889 aa).

The segment at 1 to 33 (MAPETNEKCKACGGFNFSMIDGFKYCDRCGTLL) adopts an RRN7-type zinc-finger fold. Residues Cys-9, Cys-12, Cys-26, and Cys-29 each coordinate Zn(2+). The interval 35 to 101 (NFEELEAEEG…DFFSRQALKN (67 aa)) is B-reader. Positions 102 to 113 (DELAFPHESTPD) are B-linker. Residues 114–351 (YLYRLGLRLA…SAKEQETKEA (238 aa)) are N-terminal cyclin fold. The interval 229–253 (NLDLDSEEDEEEEENPNLNKSMENL) is disordered. A compositionally biased stretch (acidic residues) spans 230 to 243 (LDLDSEEDEEEEEN). The C-terminal cyclin fold stretch occupies residues 352-510 (MTKVDYAEPY…LLVFRLTFDI (159 aa)).

This sequence belongs to the RRN7/TAF1B family.

The protein localises to the nucleus. It is found in the nucleolus. Its function is as follows. Component of RNA polymerase I core factor complex that acts as a GTF2B/TFIIB-like factor and plays a key role in multiple steps during transcription initiation such as pre-initiation complex (PIC) assembly and postpolymerase recruitment events in polymerase I (Pol I) transcription. Binds rDNA promoters and plays a role in Pol I recruitment. In Caenorhabditis briggsae, this protein is TATA box-binding protein-associated factor RNA polymerase I subunit B.